The sequence spans 177 residues: Gamma-crystallin M1-2 (177 aa).

Beta/gamma crystallin 'Greek key' domains are found at residues 2-40 (GKIIFYEDRNFQGRSYECSNDNPDLQPNFNACNSVRVEN) and 41-83 (GCWM…RLLS). A connecting peptide region spans residues 84-90 (QNLGIGT). 2 Beta/gamma crystallin 'Greek key' domains span residues 91 to 131 (NKLR…NVLD) and 132 to 174 (GYWI…RRVI).

This sequence belongs to the beta/gamma-crystallin family. Monomer.

Crystallins are the dominant structural components of the vertebrate eye lens. The polypeptide is Gamma-crystallin M1-2 (Aquarana catesbeiana (American bullfrog)).